The following is a 247-amino-acid chain: Segregation and condensation protein A (247 aa).

It belongs to the ScpA family. Component of a cohesin-like complex composed of ScpA, ScpB and the Smc homodimer, in which ScpA and ScpB bind to the head domain of Smc. The presence of the three proteins is required for the association of the complex with DNA.

It is found in the cytoplasm. Functionally, participates in chromosomal partition during cell division. May act via the formation of a condensin-like complex containing Smc and ScpB that pull DNA away from mid-cell into both cell halves. The polypeptide is Segregation and condensation protein A (Lactobacillus gasseri (strain ATCC 33323 / DSM 20243 / BCRC 14619 / CIP 102991 / JCM 1131 / KCTC 3163 / NCIMB 11718 / NCTC 13722 / AM63)).